A 309-amino-acid polypeptide reads, in one-letter code: MSNAPFPIDPELTAIAIAYRNGRMIADEVLPRVPVGKQEFKYWKYDLAQGFTVPETLVGRKSKPNEVEFSATDETSSTEDHGLDAPVPQADIDNAPTNYNPLGHATEQTTNLILLDREARTSKLVFNPNSYAAGNKRTLSGTDQWSDPASNPLPEITDALDSVILRPNIGVLGRRTATILRRHPKIVKAYNGTLGDEGMVPMAFLQELLELEAIYVGEARLNIARPGQNPSLIRAWGPHASFIYRDRLADTRNGTTFGLTGQWGDRVSGSIADPNIGLRGGQRVRVGESVKELVTAPDLGFFFENAVAA.

The interval 64 to 83 (PNEVEFSATDETSSTEDHGL) is disordered.

Multimerizes.

It localises to the virion. Functionally, probably the major capsid protein. The chain is Major capsid protein from Pseudomonas phage JBD67.